Here is a 431-residue protein sequence, read N- to C-terminus: Protein EARLY STARVATION 1, chloroplastic (431 aa).

The transit peptide at 1 to 19 (MAACSRGLVARPFDLTARG) directs the protein to the chloroplast. Disordered regions lie at residues 65-126 (GNKP…DTGI) and 403-431 (GVYP…SPLE). Residues 415-431 (PAPPSDDPPGMPPSPLE) are compositionally biased toward pro residues.

Belongs to the ESV1 family.

It localises to the plastid. Its subcellular location is the chloroplast stroma. In terms of biological role, binds preferentially to highly ordered alpha-glucans, such as starch and crystalline maltodextrins. Involved in the organization of the starch granule matrix, thus influencing starch turnover by modulating the accessibility of starch polymers to modifying and degrading enzymes. Required for the control of starch degradation in leaves and starch distribution in nonphotosynthetic parts. Promotes gravitropic responses, negative in shoots but positive in roots, by facilitating starch granules (statoliths) formation in hypocotyls and roots columella. Facilitates tight packing of starch granules in grains. The polypeptide is Protein EARLY STARVATION 1, chloroplastic (Oryza sativa subsp. indica (Rice)).